The chain runs to 257 residues: Imidazole glycerol phosphate synthase subunit HisF (257 aa).

Catalysis depends on residues Asp11 and Asp130.

The protein belongs to the HisA/HisF family. In terms of assembly, heterodimer of HisH and HisF.

Its subcellular location is the cytoplasm. The catalysed reaction is 5-[(5-phospho-1-deoxy-D-ribulos-1-ylimino)methylamino]-1-(5-phospho-beta-D-ribosyl)imidazole-4-carboxamide + L-glutamine = D-erythro-1-(imidazol-4-yl)glycerol 3-phosphate + 5-amino-1-(5-phospho-beta-D-ribosyl)imidazole-4-carboxamide + L-glutamate + H(+). The protein operates within amino-acid biosynthesis; L-histidine biosynthesis; L-histidine from 5-phospho-alpha-D-ribose 1-diphosphate: step 5/9. Its function is as follows. IGPS catalyzes the conversion of PRFAR and glutamine to IGP, AICAR and glutamate. The HisF subunit catalyzes the cyclization activity that produces IGP and AICAR from PRFAR using the ammonia provided by the HisH subunit. This Shewanella baltica (strain OS155 / ATCC BAA-1091) protein is Imidazole glycerol phosphate synthase subunit HisF.